The following is a 383-amino-acid chain: Ribosomal RNA large subunit methyltransferase G (383 aa).

It belongs to the methyltransferase superfamily. RlmG family.

It localises to the cytoplasm. It carries out the reaction guanosine(1835) in 23S rRNA + S-adenosyl-L-methionine = N(2)-methylguanosine(1835) in 23S rRNA + S-adenosyl-L-homocysteine + H(+). In terms of biological role, specifically methylates the guanine in position 1835 (m2G1835) of 23S rRNA. The chain is Ribosomal RNA large subunit methyltransferase G from Vibrio atlanticus (strain LGP32) (Vibrio splendidus (strain Mel32)).